We begin with the raw amino-acid sequence, 398 residues long: Tryptophan synthase beta chain (398 aa).

Lys88 is modified (N6-(pyridoxal phosphate)lysine).

It belongs to the TrpB family. Tetramer of two alpha and two beta chains. Pyridoxal 5'-phosphate is required as a cofactor.

It carries out the reaction (1S,2R)-1-C-(indol-3-yl)glycerol 3-phosphate + L-serine = D-glyceraldehyde 3-phosphate + L-tryptophan + H2O. It functions in the pathway amino-acid biosynthesis; L-tryptophan biosynthesis; L-tryptophan from chorismate: step 5/5. Its function is as follows. The beta subunit is responsible for the synthesis of L-tryptophan from indole and L-serine. This is Tryptophan synthase beta chain from Mannheimia succiniciproducens (strain KCTC 0769BP / MBEL55E).